The following is a 79-amino-acid chain: Major outer membrane lipoprotein Lpp 2 (79 aa).

A signal peptide spans 1-21 (MNRTNKLILGAVVLGSALLAG). Cysteine 22 carries the N-palmitoyl cysteine lipid modification. Cysteine 22 carries S-diacylglycerol cysteine lipidation. Repeats lie at residues 25–35 (NAKIDQLSSDV) and 39–49 (SAKVDQLSNDV). The stretch at 28–76 (IDQLSSDVQTLSAKVDQLSNDVNAMRSDIQAAKDDAARANQRLDNKVSR) forms a coiled coil. The disordered stretch occupies residues 60–79 (KDDAARANQRLDNKVSRVRK). Position 79 is an N6-murein peptidoglycan lysine (lysine 79).

The protein belongs to the Lpp family. In terms of assembly, homotrimer.

The protein localises to the cell outer membrane. It is found in the secreted. The protein resides in the cell wall. Its function is as follows. A highly abundant outer membrane lipoprotein that controls the distance between the inner and outer membranes. The only protein known to be covalently linked to the peptidoglycan network (PGN). Also non-covalently binds the PGN. The link between the cell outer membrane and PGN contributes to maintenance of the structural and functional integrity of the cell envelope, and maintains the correct distance between the PGN and the outer membrane. The chain is Major outer membrane lipoprotein Lpp 2 from Salmonella paratyphi A (strain ATCC 9150 / SARB42).